An 89-amino-acid chain; its full sequence is Small ribosomal subunit protein uS15 (89 aa).

Belongs to the universal ribosomal protein uS15 family. In terms of assembly, part of the 30S ribosomal subunit. Forms a bridge to the 50S subunit in the 70S ribosome, contacting the 23S rRNA.

In terms of biological role, one of the primary rRNA binding proteins, it binds directly to 16S rRNA where it helps nucleate assembly of the platform of the 30S subunit by binding and bridging several RNA helices of the 16S rRNA. Forms an intersubunit bridge (bridge B4) with the 23S rRNA of the 50S subunit in the ribosome. This chain is Small ribosomal subunit protein uS15, found in Saccharophagus degradans (strain 2-40 / ATCC 43961 / DSM 17024).